The primary structure comprises 81 residues: Exodeoxyribonuclease 7 small subunit (81 aa).

It belongs to the XseB family. As to quaternary structure, heterooligomer composed of large and small subunits.

Its subcellular location is the cytoplasm. The enzyme catalyses Exonucleolytic cleavage in either 5'- to 3'- or 3'- to 5'-direction to yield nucleoside 5'-phosphates.. Its function is as follows. Bidirectionally degrades single-stranded DNA into large acid-insoluble oligonucleotides, which are then degraded further into small acid-soluble oligonucleotides. This Pseudomonas syringae pv. syringae (strain B728a) protein is Exodeoxyribonuclease 7 small subunit.